The chain runs to 502 residues: Ubiquitin-associated protein 1 (502 aa).

The tract at residues 1–95 is interaction with ESCRT-I; the sequence is MASKKLGTDV…AEAKVNSKSG (95 aa). Residues 17–63 enclose the UMA domain; that stretch reads LDDVPFKIGDKFKTPAKVGLPIGFSLPDCLQVVREMQYDFSLEKKTI. Residues 80–100 show a composition bias toward basic and acidic residues; sequence ERKAEEAEAKVNSKSGPEGDS. Disordered regions lie at residues 80–117 and 135–156; these read ERKA…PPPI and VSSS…DFNP. Phosphoserine occurs at positions 146, 205, and 289. The interaction with PTPN23 stretch occupies residues 260–290; that stretch reads VSNIKSLSFPKLDSDDSNQKTVKLASTFHST. 2 consecutive UBA domains span residues 389–430 and 451–498; these read SPSE…LFAH and QCSE…LMAR.

In terms of assembly, component of an ESCRT-I complex (endosomal sorting complex required for transport I) which consists of TSG101, VPS28, VPS37A and UBAP1 in a 1:1:1:1 stoichiometry. Interacts with PTPN23. Interacts (via UBA domains) with ubiquitinated proteins. As to expression, ubiquitous. Highly expressed in heart, liver, brain, kidney, spleen, skeletal muscle, stomach, testis and lung.

Its subcellular location is the cytoplasm. It localises to the cytosol. It is found in the endosome. Component of the ESCRT-I complex, a regulator of vesicular trafficking process. Binds to ubiquitinated cargo proteins and is required for the sorting of endocytic ubiquitinated cargos into multivesicular bodies (MVBs). Plays a role in the proteasomal degradation of ubiquitinated cell-surface proteins, such as EGFR and BST2. This chain is Ubiquitin-associated protein 1, found in Mus musculus (Mouse).